The sequence spans 316 residues: 1-aminocyclopropane-1-carboxylate oxidase 2 (316 aa).

The Fe2OG dioxygenase domain maps to 153 to 253 (PNFGTKVSNY…RMSLASFYNP (101 aa)). Fe cation-binding residues include histidine 177, aspartate 179, and histidine 234.

It belongs to the iron/ascorbate-dependent oxidoreductase family. Fe cation serves as cofactor. In terms of tissue distribution, leaves.

The catalysed reaction is 1-aminocyclopropane-1-carboxylate + L-ascorbate + O2 = ethene + L-dehydroascorbate + hydrogen cyanide + CO2 + 2 H2O. Its pathway is alkene biosynthesis; ethylene biosynthesis via S-adenosyl-L-methionine; ethylene from S-adenosyl-L-methionine: step 2/2. The polypeptide is 1-aminocyclopropane-1-carboxylate oxidase 2 (ACO2) (Solanum lycopersicum (Tomato)).